A 381-amino-acid chain; its full sequence is V-type proton ATPase subunit C 1-B (381 aa).

Thr2 carries the post-translational modification N-acetylthreonine.

Belongs to the V-ATPase C subunit family. As to quaternary structure, V-ATPase is a heteromultimeric enzyme made up of two complexes: the ATP-hydrolytic V1 complex and the proton translocation V0 complex. The V1 complex consists of three catalytic AB heterodimers that form a heterohexamer, three peripheral stalks each consisting of EG heterodimers, one central rotor including subunits D and F, and the regulatory subunits C and H. The proton translocation complex V0 consists of the proton transport subunit a, a ring of proteolipid subunits c9c'', rotary subunit d, subunits e and f, and two accessory subunits.

In terms of biological role, subunit of the V1 complex of vacuolar(H+)-ATPase (V-ATPase), a multisubunit enzyme composed of a peripheral complex (V1) that hydrolyzes ATP and a membrane integral complex (V0) that translocates protons. V-ATPase is responsible for acidifying and maintaining the pH of intracellular compartments and in some cell types, is targeted to the plasma membrane, where it is responsible for acidifying the extracellular environment. Subunit C is necessary for the assembly of the catalytic sector of the enzyme and is likely to have a specific function in its catalytic activity. This Danio rerio (Zebrafish) protein is V-type proton ATPase subunit C 1-B (atp6v1c1b).